Here is a 289-residue protein sequence, read N- to C-terminus: UDP-3-O-acyl-N-acetylglucosamine deacetylase (289 aa).

Zn(2+) is bound by residues histidine 79, histidine 236, and aspartate 240. Histidine 263 acts as the Proton donor in catalysis.

Belongs to the LpxC family. Zn(2+) is required as a cofactor.

The enzyme catalyses a UDP-3-O-[(3R)-3-hydroxyacyl]-N-acetyl-alpha-D-glucosamine + H2O = a UDP-3-O-[(3R)-3-hydroxyacyl]-alpha-D-glucosamine + acetate. It participates in glycolipid biosynthesis; lipid IV(A) biosynthesis; lipid IV(A) from (3R)-3-hydroxytetradecanoyl-[acyl-carrier-protein] and UDP-N-acetyl-alpha-D-glucosamine: step 2/6. Functionally, catalyzes the hydrolysis of UDP-3-O-myristoyl-N-acetylglucosamine to form UDP-3-O-myristoylglucosamine and acetate, the committed step in lipid A biosynthesis. The protein is UDP-3-O-acyl-N-acetylglucosamine deacetylase of Rickettsia typhi (strain ATCC VR-144 / Wilmington).